The primary structure comprises 511 residues: Maturase K (511 aa).

It belongs to the intron maturase 2 family. MatK subfamily.

Its subcellular location is the plastid. It localises to the chloroplast. Functionally, usually encoded in the trnK tRNA gene intron. Probably assists in splicing its own and other chloroplast group II introns. The chain is Maturase K from Adesmia lanata.